The following is a 136-amino-acid chain: MTERTLILIKPDGVTNGHVGEIIARIERKGLKLAALDLRVADRETAEKHYEEHADKPFFGELVEFITSAPLIAGIVEGERAIDAWRQLAGGTDPVAKATPGTIRGDFALTVGENVVHGSDSPESAEREISIWFPNL.

K10, F58, R86, T92, R104, and N114 together coordinate ATP. H117 acts as the Pros-phosphohistidine intermediate in catalysis.

The protein belongs to the NDK family. As to quaternary structure, homotetramer. It depends on Mg(2+) as a cofactor.

The protein localises to the cytoplasm. It carries out the reaction a 2'-deoxyribonucleoside 5'-diphosphate + ATP = a 2'-deoxyribonucleoside 5'-triphosphate + ADP. It catalyses the reaction a ribonucleoside 5'-diphosphate + ATP = a ribonucleoside 5'-triphosphate + ADP. Major role in the synthesis of nucleoside triphosphates other than ATP. The ATP gamma phosphate is transferred to the NDP beta phosphate via a ping-pong mechanism, using a phosphorylated active-site intermediate. The chain is Nucleoside diphosphate kinase from Corynebacterium glutamicum (strain R).